The following is a 243-amino-acid chain: DUF724 domain-containing protein 5 (243 aa).

The segment covering 1-24 has biased composition (basic and acidic residues); it reads MREKHYSEDNSRKRKRGELEHNSD. The disordered stretch occupies residues 1-51; it reads MREKHYSEDNSRKRKRGELEHNSDLNETVLPSDWTPDPVKNFAADDDDEET. The region spanning 59-243 is the DUF724 domain; the sequence is VLPFVKKSPV…DLGVELEDVE (185 aa). Residues 174–223 adopt a coiled-coil conformation; it reads KEMKDESSKKHKAEQEFGEMERKILEVKNKVLELQKQEAALEKQKDATYE.

In terms of assembly, homodimer. As to expression, expressed in leaves, flowers and siliques.

The protein resides in the nucleus. Functionally, may be involved in the polar growth of plant cells via transportation of RNAs. This Arabidopsis thaliana (Mouse-ear cress) protein is DUF724 domain-containing protein 5.